Reading from the N-terminus, the 540-residue chain is Extracellular matrix protein 1 (540 aa).

An N-terminal signal peptide occupies residues 1–19 (MGTTARAALVLTYLAVASA). Disordered regions lie at residues 41–85 (VGYA…EATP) and 120–175 (LQHP…PSPD). Polar residues-rich tracts occupy residues 71–85 (GQSQ…EATP) and 146–156 (NAAQHCQQDRS). Repeat copies occupy residues 150-279 (HCQQ…QPHY) and 283-405 (ACPS…YPNY). The tract at residues 150–405 (HCQQDRSQGG…FARRAPYPNY (256 aa)) is 2 X approximate repeats. Asn354 is a glycosylation site (N-linked (GlcNAc...) asparagine). A glycan (N-linked (GlcNAc...) (complex) asparagine) is linked at Asn444. A disordered region spans residues 515 to 540 (ENAKGQGEQGSTGGTNISSTSEPKEE). Residues 528 to 540 (GTNISSTSEPKEE) show a composition bias toward low complexity. Residue Asn530 is glycosylated (N-linked (GlcNAc...) asparagine).

As to quaternary structure, interacts (via C-terminus) with HSPG2 (via C-terminus). Interacts with EFEMP1/FBLN3 and LAMB3. Interacts with MMP9. Expressed in breast cancer tissues. Little or no expression observed in normal breast tissues. Expressed in skin; wide expression is observed throughout the dermis with minimal expression in the epidermis.

It localises to the secreted. The protein resides in the extracellular space. It is found in the extracellular matrix. Its function is as follows. Involved in endochondral bone formation as negative regulator of bone mineralization. Stimulates the proliferation of endothelial cells and promotes angiogenesis. Inhibits MMP9 proteolytic activity. The protein is Extracellular matrix protein 1 (ECM1) of Homo sapiens (Human).